A 192-amino-acid chain; its full sequence is Transmembrane protein 276 (192 aa).

The first 32 residues, 1-32 (MAPKPGAEWSTALSHLVLGVVSLHAAVSTAEA), serve as a signal peptide directing secretion. 4 consecutive transmembrane segments (helical) span residues 35-55 (GAAA…APGL), 63-83 (AGAW…FHWV), 89-109 (SANL…HLGP), and 114-134 (VAGQ…AVFT).

Its subcellular location is the membrane. The polypeptide is Transmembrane protein 276 (Homo sapiens (Human)).